The chain runs to 184 residues: Photosystem I assembly protein Ycf4 (184 aa).

A run of 2 helical transmembrane segments spans residues 22-42 and 57-77; these read FCWA…GTSS and ILFF…LFIS.

This sequence belongs to the Ycf4 family.

It is found in the plastid. The protein resides in the chloroplast thylakoid membrane. In terms of biological role, seems to be required for the assembly of the photosystem I complex. The polypeptide is Photosystem I assembly protein Ycf4 (Chloranthus spicatus (Chulantree)).